The primary structure comprises 157 residues: Glutaredoxin-2, mitochondrial (157 aa).

Residues 1–19 (MSWYRAASVGRRLVASGRI) constitute a mitochondrion transit peptide. The Glutaredoxin domain occupies 50–150 (VNQIQETISN…PLVHQCYLNK (101 aa)). Residue C61 participates in [2Fe-2S] cluster binding. K67 serves as a coordination point for glutathione. C70 carries the post-translational modification S-glutathionyl cysteine; alternate. A disulfide bond links C70 and C73. 2 residues coordinate glutathione: Q102 and V114. Position 146 (C146) interacts with [2Fe-2S] cluster.

It belongs to the glutaredoxin family. In terms of assembly, monomer; active form. Homodimer; inactive form. The homodimer is probably linked by 1 2Fe-2S cluster.

It is found in the mitochondrion. The protein localises to the nucleus. Its activity is regulated as follows. The 2Fe-2S present in the homodimer leads to inactivation of the enzyme. The 2Fe-2S may serve as a redox sensor: the presence of one-electron oxidants or reductants leading to the loss of the 2Fe-2S cluster, subsequent monomerization and activation of the enzyme. Glutathione-dependent oxidoreductase that facilitates the maintenance of mitochondrial redox homeostasis upon induction of apoptosis by oxidative stress. Involved in response to hydrogen peroxide and regulation of apoptosis caused by oxidative stress. Acts as a very efficient catalyst of monothiol reactions because of its high affinity for protein glutathione-mixed disulfides. Can receive electrons not only from glutathione (GSH), but also from thioredoxin reductase supporting both monothiol and dithiol reactions. Efficiently catalyzes both glutathionylation and deglutathionylation of mitochondrial complex I, which in turn regulates the superoxide production by the complex. Overexpression decreases the susceptibility to apoptosis and prevents loss of cardiolipin and cytochrome c release. The polypeptide is Glutaredoxin-2, mitochondrial (Glrx2) (Rattus norvegicus (Rat)).